We begin with the raw amino-acid sequence, 140 residues long: 3-hydroxyacyl-[acyl-carrier-protein] dehydratase FabZ (140 aa).

His48 is an active-site residue.

Belongs to the thioester dehydratase family. FabZ subfamily.

Its subcellular location is the cytoplasm. The enzyme catalyses a (3R)-hydroxyacyl-[ACP] = a (2E)-enoyl-[ACP] + H2O. In terms of biological role, involved in unsaturated fatty acids biosynthesis. Catalyzes the dehydration of short chain beta-hydroxyacyl-ACPs and long chain saturated and unsaturated beta-hydroxyacyl-ACPs. This is 3-hydroxyacyl-[acyl-carrier-protein] dehydratase FabZ from Caldicellulosiruptor saccharolyticus (strain ATCC 43494 / DSM 8903 / Tp8T 6331).